The sequence spans 442 residues: tRNA modification GTPase MnmE (442 aa).

R24, E82, and K120 together coordinate (6S)-5-formyl-5,6,7,8-tetrahydrofolate. One can recognise a TrmE-type G domain in the interval 217 to 367 (GLHIVITGEP…LISLIKKKAE (151 aa)). GTP-binding positions include 227 to 232 (NVGKST), 246 to 252 (SEYAGTT), and 271 to 274 (DTAG). S231 lines the Mg(2+) pocket. S246 contributes to the K(+) binding site. Residue T252 coordinates Mg(2+). A (6S)-5-formyl-5,6,7,8-tetrahydrofolate-binding site is contributed by K442.

This sequence belongs to the TRAFAC class TrmE-Era-EngA-EngB-Septin-like GTPase superfamily. TrmE GTPase family. In terms of assembly, homodimer. Heterotetramer of two MnmE and two MnmG subunits. K(+) is required as a cofactor.

It is found in the cytoplasm. Exhibits a very high intrinsic GTPase hydrolysis rate. Involved in the addition of a carboxymethylaminomethyl (cmnm) group at the wobble position (U34) of certain tRNAs, forming tRNA-cmnm(5)s(2)U34. This is tRNA modification GTPase MnmE from Wolbachia pipientis subsp. Culex pipiens (strain wPip).